Reading from the N-terminus, the 102-residue chain is Urease subunit beta (102 aa).

It belongs to the urease beta subunit family. In terms of assembly, heterotrimer of UreA (gamma), UreB (beta) and UreC (alpha) subunits. Three heterotrimers associate to form the active enzyme.

It is found in the cytoplasm. The catalysed reaction is urea + 2 H2O + H(+) = hydrogencarbonate + 2 NH4(+). The protein operates within nitrogen metabolism; urea degradation; CO(2) and NH(3) from urea (urease route): step 1/1. The protein is Urease subunit beta of Bordetella parapertussis (strain 12822 / ATCC BAA-587 / NCTC 13253).